Reading from the N-terminus, the 380-residue chain is ER-phagy receptor 1 (380 aa).

Residues Asp-9–Tyr-74 form the J domain. The C2H2-type zinc finger occupies Ile-270 to His-294. Residues Lys-307–Ser-337 are disordered. Ser-344 is subject to Phosphoserine. The AIM signature appears at Phe-352–Val-355. Positions Glu-361–Glu-367 match the FFAT motif.

As to quaternary structure, interacts (via the AIM motif) with atg8. Interacts (via the FFAT motif) with the vesicle-associated membrane protein-associated protein (VAP) family proteins scs2 and scs22.

Its subcellular location is the endoplasmic reticulum. The protein resides in the preautophagosomal structure. Reticulophagy receptor required for autophagosomal sequestration of endoplasmic reticulum (ER) membranes during ER stress. Confers resistance to ER stress by promoting the autophagic degradation of the ER (ER-phagy or reticulophagy). Acts as a bridging molecule to mediate the association between atg8 on the autophagic membrane and the vesicle-associated membrane protein-associated proteins (VAPs) scs2 and scs22 on the ER. May play a role in meiosis. This chain is ER-phagy receptor 1, found in Schizosaccharomyces pombe (strain 972 / ATCC 24843) (Fission yeast).